Reading from the N-terminus, the 348-residue chain is Cell surface glycoprotein CD200 receptor 1 (348 aa).

The signal sequence occupies residues M1–A24. Over Q29–K265 the chain is Extracellular. Residues N31, N60, N69, N116, N122, N185, N218, N233, and N247 are each glycosylated (N-linked (GlcNAc...) asparagine). 2 cysteine pairs are disulfide-bonded: C83–C155 and C107–C123. In terms of domain architecture, Ig-like C2-type spans P160–Y251. Disulfide bonds link C190/C239 and C209/C227. Residues L266–L286 traverse the membrane as a helical segment. The Cytoplasmic segment spans residues L287 to L348.

This sequence belongs to the CD200R family. As to quaternary structure, CD200 and CD200R1 interact via their respective N-terminal Ig-like domains. Interacts with Human herpesvirus 8 vOX2 protein. In terms of assembly, (Microbial infection) Interacts with human herpesvirus 8/HHV-8 protein vOX2/K14. Expressed in granulocytes, monocytes, most T-cells, neutrophils, basophils and a subset of NK, NKT and B-cells (at protein level). Expressed in bone marrow, lymph nodes, spleen, lung, liver, spinal cord, kidney. Expressed in monocyte-derived dendritic and mast cells.

Its subcellular location is the cell membrane. The protein localises to the secreted. In terms of biological role, inhibitory receptor for the CD200/OX2 cell surface glycoprotein. Limits inflammation by inhibiting the expression of pro-inflammatory molecules including TNF-alpha, interferons, and inducible nitric oxide synthase (iNOS) in response to selected stimuli. Also binds to HHV-8 K14 viral CD200 homolog with identical affinity and kinetics as the host CD200. This Homo sapiens (Human) protein is Cell surface glycoprotein CD200 receptor 1 (CD200R1).